A 528-amino-acid polypeptide reads, in one-letter code: Glutamyl-tRNA(Gln) amidotransferase subunit A, mitochondrial (528 aa).

Catalysis depends on K76, which acts as the Charge relay system. Positions Y148–I167 are disordered. The active-site Charge relay system is the S171. Residue S195 is the Acyl-ester intermediate of the active site.

This sequence belongs to the amidase family. GatA subfamily. In terms of assembly, subunit of the heterotrimeric GatCAB amidotransferase (AdT) complex, composed of A (QRSL1), B (GATB) and C (GATC) subunits.

The protein localises to the mitochondrion. The catalysed reaction is L-glutamyl-tRNA(Gln) + L-glutamine + ATP + H2O = L-glutaminyl-tRNA(Gln) + L-glutamate + ADP + phosphate + H(+). Its function is as follows. Allows the formation of correctly charged Gln-tRNA(Gln) through the transamidation of misacylated Glu-tRNA(Gln) in the mitochondria. The reaction takes place in the presence of glutamine and ATP through an activated gamma-phospho-Glu-tRNA(Gln). The sequence is that of Glutamyl-tRNA(Gln) amidotransferase subunit A, mitochondrial from Homo sapiens (Human).